The following is a 230-amino-acid chain: MSEIKDVIVQGLWKNNSALVQLLGMCPLLAVTSTATNALGLGLATTLVLTLTNLTISTLRRWTPTEIRIPIYVMIIASVVSAVQMLINAYAFGLYQSLGIFIPLIVTNCIVVGRAEAFAAKKGPALSALDGFAIGMGATGAMFVLGAMREIIGNGTLFDGADALLGNWAKVLRVEIFHTDSPFLLAMLPPGAFIGLGLMLAGKYLIDEKMKKRRAKTVVNEIPAGETGKV.

Helical transmembrane passes span 18-38 (ALVQLLGMCPLLAVTSTATNA), 39-59 (LGLGLATTLVLTLTNLTISTL), 63-83 (TPTEIRIPIYVMIIASVVSAV), 86-106 (LINAYAFGLYQSLGIFIPLIV), 128-148 (ALDGFAIGMGATGAMFVLGAM), and 182-202 (PFLLAMLPPGAFIGLGLMLAG).

It belongs to the NqrDE/RnfAE family. The complex is composed of six subunits: RsxA, RsxB, RsxC, RsxD, RsxE and RsxG.

Its subcellular location is the cell inner membrane. Functionally, part of a membrane-bound complex that couples electron transfer with translocation of ions across the membrane. Required to maintain the reduced state of SoxR. The protein is Ion-translocating oxidoreductase complex subunit E of Escherichia fergusonii (strain ATCC 35469 / DSM 13698 / CCUG 18766 / IAM 14443 / JCM 21226 / LMG 7866 / NBRC 102419 / NCTC 12128 / CDC 0568-73).